The primary structure comprises 250 residues: tRNA (guanine-N(7)-)-methyltransferase (250 aa).

Residues 1 to 10 show a composition bias toward basic and acidic residues; the sequence is MTPDDPRDAS. Residues 1 to 30 form a disordered region; sequence MTPDDPRDASDASLADATADSASRGHGSFF. The segment covering 11–24 has biased composition (low complexity); it reads DASLADATADSASR. 4 residues coordinate S-adenosyl-L-methionine: Glu79, Glu104, Asp131, and Asp153. The active site involves Asp153. The substrate site is built by Lys157 and Asp189.

This sequence belongs to the class I-like SAM-binding methyltransferase superfamily. TrmB family.

It carries out the reaction guanosine(46) in tRNA + S-adenosyl-L-methionine = N(7)-methylguanosine(46) in tRNA + S-adenosyl-L-homocysteine. The protein operates within tRNA modification; N(7)-methylguanine-tRNA biosynthesis. Its function is as follows. Catalyzes the formation of N(7)-methylguanine at position 46 (m7G46) in tRNA. The sequence is that of tRNA (guanine-N(7)-)-methyltransferase from Rhodopseudomonas palustris (strain BisA53).